The sequence spans 585 residues: Arginine--tRNA ligase (585 aa).

The 'HIGH' region motif lies at 131–141 (ANPTGPMHVGH).

It belongs to the class-I aminoacyl-tRNA synthetase family. In terms of assembly, monomer.

The protein localises to the cytoplasm. The enzyme catalyses tRNA(Arg) + L-arginine + ATP = L-arginyl-tRNA(Arg) + AMP + diphosphate. This Brucella ovis (strain ATCC 25840 / 63/290 / NCTC 10512) protein is Arginine--tRNA ligase.